The sequence spans 179 residues: ATP synthase subunit delta (179 aa).

It belongs to the ATPase delta chain family. In terms of assembly, F-type ATPases have 2 components, F(1) - the catalytic core - and F(0) - the membrane proton channel. F(1) has five subunits: alpha(3), beta(3), gamma(1), delta(1), epsilon(1). F(0) has three main subunits: a(1), b(2) and c(10-14). The alpha and beta chains form an alternating ring which encloses part of the gamma chain. F(1) is attached to F(0) by a central stalk formed by the gamma and epsilon chains, while a peripheral stalk is formed by the delta and b chains.

It localises to the cell inner membrane. Its function is as follows. F(1)F(0) ATP synthase produces ATP from ADP in the presence of a proton or sodium gradient. F-type ATPases consist of two structural domains, F(1) containing the extramembraneous catalytic core and F(0) containing the membrane proton channel, linked together by a central stalk and a peripheral stalk. During catalysis, ATP synthesis in the catalytic domain of F(1) is coupled via a rotary mechanism of the central stalk subunits to proton translocation. In terms of biological role, this protein is part of the stalk that links CF(0) to CF(1). It either transmits conformational changes from CF(0) to CF(1) or is implicated in proton conduction. In Burkholderia pseudomallei (strain 1710b), this protein is ATP synthase subunit delta.